An 88-amino-acid chain; its full sequence is Small ribosomal subunit protein uS17 (88 aa).

Belongs to the universal ribosomal protein uS17 family. In terms of assembly, part of the 30S ribosomal subunit.

One of the primary rRNA binding proteins, it binds specifically to the 5'-end of 16S ribosomal RNA. The protein is Small ribosomal subunit protein uS17 of Prochlorococcus marinus (strain MIT 9303).